Consider the following 443-residue polypeptide: dTDP-4-dehydro-6-deoxy-alpha-D-glucopyranose 2,3-dehydratase (443 aa).

Residues W35, 118 to 122 (TFSNY), S157, W260, R325, 341 to 343 (QCN), 346 to 347 (NL), and 377 to 380 (EGGR) contribute to the dTDP-4-dehydro-6-deoxy-alpha-D-glucose site.

The protein belongs to the hexose 2,3-dehydratase family. Homodimer.

The catalysed reaction is dTDP-4-dehydro-6-deoxy-alpha-D-glucose = dTDP-3,4-didehydro-2,6-dideoxy-alpha-D-glucose + H2O. It participates in antibiotic biosynthesis; granaticin biosynthesis. Its function is as follows. Involved in the biosynthesis of the 2,6-deoxysugar, dTDP-L-rhodinose, attached to the benzoisochromane quinone chromophore to produce the aglycone antibiotics granaticin and granaticin B. Catalyzes the removal of the hydroxyl group at position C-2 of the hexose ring of dTDP-4-dehydro-6-deoxy-alpha-D-glucopyranose, and the oxidation of the hydroxyl group at position C-3 to form a carbonyl functionality. The product of the reaction, dTDP-2,6-dideoxy-D-glycero-hex-2-enos-4-ulose, is a highly unstable diketosugar, which spontaneously forms dTDP-3,4-didehydro-2,6-dideoxy-alpha-D-glucose. The sequence is that of dTDP-4-dehydro-6-deoxy-alpha-D-glucopyranose 2,3-dehydratase from Streptomyces violaceoruber.